A 358-amino-acid chain; its full sequence is Arginase (358 aa).

Mn(2+)-binding residues include His-146, Asp-174, His-176, and Asp-178. Substrate is bound by residues 176–180 (HADIN), 187–189 (SGN), and Asp-233. Mn(2+) is bound by residues Asp-280 and Asp-282. The substrate site is built by Thr-294 and Glu-325.

It belongs to the arginase family. As to quaternary structure, homohexamer. Mn(2+) serves as cofactor.

Its subcellular location is the cytoplasm. The catalysed reaction is L-arginine + H2O = urea + L-ornithine. Its pathway is nitrogen metabolism; urea cycle; L-ornithine and urea from L-arginine: step 1/1. The polypeptide is Arginase (aga-1) (Neurospora crassa (strain ATCC 24698 / 74-OR23-1A / CBS 708.71 / DSM 1257 / FGSC 987)).